The primary structure comprises 584 residues: Aspartate--tRNA(Asp/Asn) ligase (584 aa).

Residue Glu174 coordinates L-aspartate. Residues 198 to 201 (QLFK) form an aspartate region. Residue Arg220 participates in L-aspartate binding. Residues 220–222 (RDE) and Gln229 each bind ATP. His447 is a binding site for L-aspartate. Position 480 (Glu480) interacts with ATP. L-aspartate is bound at residue Arg487. ATP is bound at residue 532 to 535 (GFDR).

This sequence belongs to the class-II aminoacyl-tRNA synthetase family. Type 1 subfamily. As to quaternary structure, homodimer.

It localises to the cytoplasm. The enzyme catalyses tRNA(Asx) + L-aspartate + ATP = L-aspartyl-tRNA(Asx) + AMP + diphosphate. In terms of biological role, aspartyl-tRNA synthetase with relaxed tRNA specificity since it is able to aspartylate not only its cognate tRNA(Asp) but also tRNA(Asn). Reaction proceeds in two steps: L-aspartate is first activated by ATP to form Asp-AMP and then transferred to the acceptor end of tRNA(Asp/Asn). The sequence is that of Aspartate--tRNA(Asp/Asn) ligase from Endomicrobium trichonymphae.